A 294-amino-acid chain; its full sequence is NAD kinase (294 aa).

D74 (proton acceptor) is an active-site residue. NAD(+) contacts are provided by residues 74-75 (DG), 148-149 (NE), H159, R176, D178, 189-194 (TAYSLS), and Q249.

It belongs to the NAD kinase family. A divalent metal cation serves as cofactor.

The protein resides in the cytoplasm. It carries out the reaction NAD(+) + ATP = ADP + NADP(+) + H(+). Involved in the regulation of the intracellular balance of NAD and NADP, and is a key enzyme in the biosynthesis of NADP. Catalyzes specifically the phosphorylation on 2'-hydroxyl of the adenosine moiety of NAD to yield NADP. This chain is NAD kinase, found in Vibrio atlanticus (strain LGP32) (Vibrio splendidus (strain Mel32)).